A 297-amino-acid polypeptide reads, in one-letter code: Ribonuclease H2 subunit A (297 aa).

The 228-residue stretch at 21–248 folds into the RNase H type-2 domain; the sequence is PCVLGIDEAG…ASTIVEKRCV (228 aa). Asp27, Glu28, and Asp138 together coordinate a divalent metal cation.

This sequence belongs to the RNase HII family. Eukaryotic subfamily. The cofactor is Mn(2+). Mg(2+) is required as a cofactor.

It carries out the reaction Endonucleolytic cleavage to 5'-phosphomonoester.. Its function is as follows. Catalytic subunit of RNase HII, an endonuclease that specifically degrades the RNA of RNA:DNA hybrids. Participates in DNA replication, possibly by mediating the removal of lagging-strand Okazaki fragment RNA primers during DNA replication. Mediates the excision of single ribonucleotides from DNA:RNA duplexes. This Caenorhabditis elegans protein is Ribonuclease H2 subunit A (rnh-2).